Here is a 197-residue protein sequence, read N- to C-terminus: Nucleoside triphosphate pyrophosphatase (197 aa).

The active-site Proton acceptor is the aspartate 74.

The protein belongs to the Maf family. A divalent metal cation serves as cofactor.

It is found in the cytoplasm. It carries out the reaction a ribonucleoside 5'-triphosphate + H2O = a ribonucleoside 5'-phosphate + diphosphate + H(+). The enzyme catalyses a 2'-deoxyribonucleoside 5'-triphosphate + H2O = a 2'-deoxyribonucleoside 5'-phosphate + diphosphate + H(+). Nucleoside triphosphate pyrophosphatase. May have a dual role in cell division arrest and in preventing the incorporation of modified nucleotides into cellular nucleic acids. In Granulibacter bethesdensis (strain ATCC BAA-1260 / CGDNIH1), this protein is Nucleoside triphosphate pyrophosphatase.